We begin with the raw amino-acid sequence, 429 residues long: GDP-fucose protein O-fucosyltransferase 2 (429 aa).

Residues 1 to 21 form the signal peptide; that stretch reads MATLSFVFLLLGAVSWPPASA. 53–57 provides a ligand contact to GDP-beta-L-fucose; the sequence is PEGFN. Catalysis depends on Glu54, which acts as the Proton acceptor. Residues Cys161 and Cys192 are joined by a disulfide bond. 3 N-linked (GlcNAc...) asparagine glycosylation sites follow: Asn189, Asn209, and Asn259. Residues 292–294, Asp371, and 388–389 each bind GDP-beta-L-fucose; these read HLR and TF. A disulfide bond links Cys412 and Cys419.

This sequence belongs to the glycosyltransferase 68 family. Isoform A is expressed in fetal liver and peripheral blood lymphocytes. Isoform B is expressed in spleen, lung, testis, bone marrow, thymus, pancreas, prostate, fetal brain, fetal liver and fetal kidney. Isoform C is expressed in brain, heart, spleen, liver, lung, stomach, testis, placenta, skin, thymus, pancreas, mammary gland, prostate, fetal brain, fetal liver and fetal heart.

The protein localises to the endoplasmic reticulum. Its subcellular location is the golgi apparatus. The enzyme catalyses L-seryl-[protein] + GDP-beta-L-fucose = 3-O-(alpha-L-fucosyl)-L-seryl-[protein] + GDP + H(+). It catalyses the reaction L-threonyl-[protein] + GDP-beta-L-fucose = 3-O-(alpha-L-fucosyl)-L-threonyl-[protein] + GDP + H(+). It participates in protein modification; protein glycosylation. With respect to regulation, inhibited by EDTA and by Zn(2+). In terms of biological role, catalyzes the reaction that attaches fucose through an O-glycosidic linkage to a conserved serine or threonine residue in the consensus sequence C1-X-X-S/T-C2 of thrombospondin type I repeats (TSRs) where C1 and C2 are the first and second cysteines of the repeat, respectively. O-fucosylates members of several protein families including the ADAMTS, the thrombospondin (TSP) and spondin families. Required for the proper secretion of ADAMTS family members such as ADAMTSL1 and ADAMTS13. The O-fucosylation of TSRs is also required for restricting epithelial to mesenchymal transition (EMT), maintaining the correct patterning of mesoderm and localization of the definite endoderm. The polypeptide is GDP-fucose protein O-fucosyltransferase 2 (POFUT2) (Homo sapiens (Human)).